A 426-amino-acid polypeptide reads, in one-letter code: Trophoblast glycoprotein (426 aa).

A signal peptide spans 1–31 (MPGAGSRGPSAGDGRLRLARLALVLLGWVSA). At 32–361 (SAPSSSVPSS…AVLPQSLQTS (330 aa)) the chain is on the extracellular side. Residues 33–47 (APSSSVPSSSTSPAA) show a composition bias toward low complexity. The tract at residues 33 to 53 (APSSSVPSSSTSPAAFLASGS) is disordered. In terms of domain architecture, LRRNT spans 53 to 91 (SAQPPPAERCPAACECSEAARTVKCVNRNLLEVPADLPP). Disulfide bonds link Cys62-Cys68 and Cys66-Cys77. 7 LRR repeats span residues 92–113 (YVRN…AFAR), 116–139 (PLAD…GAFE), 141–163 (LPGL…FAFA), 172–210 (PSPL…AALR), 215–238 (LRGL…LLAQ), 239–261 (LPSL…ASFR), and 262–281 (NLTH…VLHN). Asn124 carries an N-linked (GlcNAc...) asparagine glycan. The N-linked (GlcNAc...) asparagine glycan is linked to Asn281. The LRRCT domain maps to 289-352 (GLAHVKVFLD…LNSSDLDCDA (64 aa)). Intrachain disulfides connect Cys304-Cys329 and Cys306-Cys350. The helical transmembrane segment at 362-382 (YVFLGIVLALIGAIFLLVLYL) threads the bilayer. The Cytoplasmic portion of the chain corresponds to 383 to 426 (NRKGIKKWMHNIRDACRDHMEGYHYRYEINADPRLTNLSSNSDV). Ser424 is modified (phosphoserine).

Post-translationally, highly glycosylated. As to expression, highly expressed in embryo and placenta. In adult, expressed only in brain and ovary. Not detected in kidney small intestine, heart, spleen, testis, liver, lung, thymus and stomach.

It localises to the cell membrane. In terms of biological role, may function as an inhibitor of Wnt/beta-catenin signaling by indirectly interacting with LRP6 and blocking Wnt3a-dependent LRP6 internalization. In Mus musculus (Mouse), this protein is Trophoblast glycoprotein (Tpbg).